A 934-amino-acid chain; its full sequence is Oxysterol-binding protein-related protein 6 (934 aa).

A disordered region spans residues 1–62 (MSSDEKGISP…RQLLEPEPVP (62 aa)). Ser2 is subject to N-acetylserine. A compositionally biased stretch (low complexity) spans 14–29 (TSTPTHRSASSSTSSQ). Basic and acidic residues predominate over residues 30–40 (RDSRQSIHILE). The residue at position 35 (Ser35) is a Phosphoserine. The span at 42–53 (TASSSTEPSVSR) shows a compositional bias: polar residues. One can recognise a PH domain in the interval 86–181 (PDKHEGFMLK…WVSKLRHHRL (96 aa)). Phosphoserine occurs at positions 190 and 290.

This sequence belongs to the OSBP family. In terms of assembly, homodimer. Interacts with OSBPL3. As to expression, expressed in brain and striated muscle (at protein level). Widely expressed. Expressed in skeletal muscle.

The protein localises to the cytoplasm. Its subcellular location is the cytosol. The protein resides in the endoplasmic reticulum membrane. It is found in the nucleus envelope. It localises to the cell membrane. The protein localises to the endosome membrane. Functionally, regulates cellular transport and efflux of cholesterol. Plays a role in phosphatidylinositol-4-phophate (PI4P) turnover at the neuronal membrane. Binds via its PH domain PI4P, phosphatidylinositol-4,5-diphosphate, phosphatidylinositol-3,4,5-triphosphate, and phosphatidic acid. Weakly binds 25-hydroxycholesterol. The chain is Oxysterol-binding protein-related protein 6 (OSBPL6) from Homo sapiens (Human).